The sequence spans 156 residues: MSRRNKSKKRLIQKDPVHESKLVSMLTARILKSGKKGLAYKIVYEALDIINKKTSHDSLEILEKAIRNATPLVEVKSRRIGGSTYQVPMEVRAYRGTNLALRWITMFAHTRSGRSMAFRLANEIIDASNESGNTIRKREETHRMAEANKAFAHYRY.

It belongs to the universal ribosomal protein uS7 family. In terms of assembly, part of the 30S ribosomal subunit.

The protein resides in the plastid. Its subcellular location is the chloroplast. Functionally, one of the primary rRNA binding proteins, it binds directly to 16S rRNA where it nucleates assembly of the head domain of the 30S subunit. The chain is Small ribosomal subunit protein uS7c (rps7) from Gracilaria tenuistipitata var. liui (Red alga).